A 323-amino-acid chain; its full sequence is MLCGRFAPTPSGALHLGNARTALLAWLHARRAGGRFILRIEDIDRARSRPHLAEQAIADLRWLGLDWDEGPDVGGPHGPYCQSEREELYRDALARLQAEGRLYPCYCSRAQLMAIASAPHGLTSEGPAYPGTCRRLTPEERRAREADGKTPSLRFALPDEEIAFTDLIAGPQRFPPGAGGDFVVLRADGVIGYQLAVVVDDALMGVTHVLRGGDLLDSTPRQILLYRALGRPVPAFGHLPLLLGPDGARLAKRHGAVTLAGIRAAGTSPETVVGHLAYLSGLVDQPEPVRPEELIPVFDLARIPREPVRIPAETIAALSGGTA.

L-glutamate-binding positions include 5–9 and E41; that span reads RFAPT. The short motif at 8-18 is the 'HIGH' region element; that stretch reads PTPSGALHLGN. The Zn(2+) site is built by C105, C107, Y129, and C133. 2 residues coordinate L-glutamate: Y193 and R211. Positions 249 to 253 match the 'KMSKS' region motif; it reads RLAKR. K252 is an ATP binding site.

It belongs to the class-I aminoacyl-tRNA synthetase family. GluQ subfamily. The cofactor is Zn(2+).

Its function is as follows. Catalyzes the tRNA-independent activation of glutamate in presence of ATP and the subsequent transfer of glutamate onto a tRNA(Asp). Glutamate is transferred on the 2-amino-5-(4,5-dihydroxy-2-cyclopenten-1-yl) moiety of the queuosine in the wobble position of the QUC anticodon. This is Glutamyl-Q tRNA(Asp) synthetase from Symbiobacterium thermophilum (strain DSM 24528 / JCM 14929 / IAM 14863 / T).